A 621-amino-acid polypeptide reads, in one-letter code: MYDIIVAGAGHAGCEAALAAARSGSSCLLISSDLTAVARMSCNPAIGGVAKGQITREIDALGGEMAKAIDATGIQFRMLNLSKGPAMHSPRAQADRTAYTEYMKRVLEAETNLDLLQDTVTGIEVRGGQFFGVELQSGRILRAGAAILTCGTFLNGLIHIGMNHFPGGRTIAEPPVTGLTESLVAAGFTTARLKTGTPPRVDRRSIDYSIVIEQKGDENPPPFSFSSGSIAGKEQISCFLTKTTHKTHEILRTGFDRSPLFSGKVQGVGPRYCPSIEDKIHRFTERDSHHIFLEPEGFHTNEMYVNGFSTSLPEDIQIAGLQSIPGMEEVKMIRPGYAIEYDYFHPSQIRRSLETKAVENLYFAGQINGTSGYEEAAAQGLMAGINASRKLKELPPIHLQRSDAYIGVLIDDLVTKETNEPYRMFTSSAEHRLILRHDNADLRLRKFGHTAGLVDDDTYRETLSKDDEIVRMTAFLRSKTIPTTALYNLLPAESNRPMTGGQKAASALKRPGITLNRLFAALPDFAKEARLISSNPLVHEQVEINLAYEGYLKRELLQTEKVARLESLILPETFNYHSVTGLSSEGREKLLHFRPETLGQASRIMGVSPSDISVLMVRLGR.

8–13 provides a ligand contact to FAD; the sequence is GAGHAG. 269–283 is an NAD(+) binding site; that stretch reads GPRYCPSIEDKIHRF.

The protein belongs to the MnmG family. In terms of assembly, homodimer. Heterotetramer of two MnmE and two MnmG subunits. Requires FAD as cofactor.

It is found in the cytoplasm. Its function is as follows. NAD-binding protein involved in the addition of a carboxymethylaminomethyl (cmnm) group at the wobble position (U34) of certain tRNAs, forming tRNA-cmnm(5)s(2)U34. The polypeptide is tRNA uridine 5-carboxymethylaminomethyl modification enzyme MnmG (Chlorobium phaeovibrioides (strain DSM 265 / 1930) (Prosthecochloris vibrioformis (strain DSM 265))).